The primary structure comprises 160 residues: Small ribosomal subunit protein uS7 (160 aa).

This sequence belongs to the universal ribosomal protein uS7 family. In terms of assembly, part of the 30S ribosomal subunit. Contacts proteins S9 and S11.

In terms of biological role, one of the primary rRNA binding proteins, it binds directly to 16S rRNA where it nucleates assembly of the head domain of the 30S subunit. Is located at the subunit interface close to the decoding center, probably blocks exit of the E-site tRNA. The chain is Small ribosomal subunit protein uS7 from Anaplasma phagocytophilum (strain HZ).